We begin with the raw amino-acid sequence, 465 residues long: Glutamate--tRNA ligase (465 aa).

The 'HIGH' region signature appears at 11-21 (PSPTGYLHIGG). Residues 243-247 (KLSKR) carry the 'KMSKS' region motif. Residue lysine 246 participates in ATP binding.

It belongs to the class-I aminoacyl-tRNA synthetase family. Glutamate--tRNA ligase type 1 subfamily. Monomer.

The protein localises to the cytoplasm. The enzyme catalyses tRNA(Glu) + L-glutamate + ATP = L-glutamyl-tRNA(Glu) + AMP + diphosphate. Catalyzes the attachment of glutamate to tRNA(Glu) in a two-step reaction: glutamate is first activated by ATP to form Glu-AMP and then transferred to the acceptor end of tRNA(Glu). This chain is Glutamate--tRNA ligase, found in Aromatoleum aromaticum (strain DSM 19018 / LMG 30748 / EbN1) (Azoarcus sp. (strain EbN1)).